The primary structure comprises 249 residues: Probable transcriptional regulatory protein Rru_A1086 (249 aa).

The protein belongs to the TACO1 family.

Its subcellular location is the cytoplasm. In Rhodospirillum rubrum (strain ATCC 11170 / ATH 1.1.1 / DSM 467 / LMG 4362 / NCIMB 8255 / S1), this protein is Probable transcriptional regulatory protein Rru_A1086.